Here is a 469-residue protein sequence, read N- to C-terminus: 3-isopropylmalate dehydratase large subunit (469 aa).

The [4Fe-4S] cluster site is built by Cys-347, Cys-410, and Cys-413.

The protein belongs to the aconitase/IPM isomerase family. LeuC type 1 subfamily. As to quaternary structure, heterodimer of LeuC and LeuD. The cofactor is [4Fe-4S] cluster.

It carries out the reaction (2R,3S)-3-isopropylmalate = (2S)-2-isopropylmalate. The protein operates within amino-acid biosynthesis; L-leucine biosynthesis; L-leucine from 3-methyl-2-oxobutanoate: step 2/4. Catalyzes the isomerization between 2-isopropylmalate and 3-isopropylmalate, via the formation of 2-isopropylmaleate. This Burkholderia orbicola (strain MC0-3) protein is 3-isopropylmalate dehydratase large subunit.